We begin with the raw amino-acid sequence, 956 residues long: Nitrogen regulatory protein NUT1 (956 aa).

Positions 1–12 (MNPTITEHDFRF) are enriched in basic and acidic residues. Disordered regions lie at residues 1-51 (MNPT…NDAQ), 120-222 (QQEE…PAAA), 240-262 (KTSI…FQVP), 348-373 (GQSI…SQVS), and 524-661 (TLPG…DAPT). A compositionally biased stretch (low complexity) spans 15–37 (RPAAPGRDPGSDSSDDPLPASLR). 4 stretches are compositionally biased toward polar residues: residues 42-51 (DRQSAFNDAQ), 131-153 (PLKT…QKKS), 167-194 (SHGS…NAIS), and 208-217 (AAQSQFNPQS). The span at 588–613 (NASTTAIPNSQMQYEQQGVQGHTNSP) shows a compositional bias: polar residues. Low complexity-rich tracts occupy residues 623–633 (SGFSSVVHSRP) and 640–661 (SKNG…DAPT). The GATA-type zinc-finger motif lies at 663 to 687 (CTNCATQTTPLWRRNPEGQPLCNAC). Residues 708–890 (KKRNRGSGSN…AATRPSGFGT (183 aa)) form a disordered region. Positions 713 to 760 (GSGSNVPGATSGSRSKKGATSTAVSGTNTRKNSSLAISRTASTTNVQV) are enriched in polar residues. Residues 812–839 (VVPIAAAPPKNMPGPGAAAAARTVALGP) show a composition bias toward low complexity. Polar residues-rich tracts occupy residues 849–863 (SPAN…NANH) and 872–881 (PENSTGSNEA).

Its subcellular location is the nucleus. Functionally, major nitrogen regulatory protein; activates expression of nitrogen-regulated genes. The polypeptide is Nitrogen regulatory protein NUT1 (NUT1) (Pyricularia oryzae (strain 70-15 / ATCC MYA-4617 / FGSC 8958) (Rice blast fungus)).